The following is a 644-amino-acid chain: SURP and G-patch domain-containing protein 1 (644 aa).

Positions 44-54 (REIEARMEQKA) are enriched in basic and acidic residues. 2 disordered regions span residues 44 to 74 (REIE…ADAQ) and 98 to 122 (AQAS…KRPL). Position 128 is a phosphothreonine (Thr128). The SURP motif 1 repeat unit spans residues 188–230 (VIEKLARFVAEGGPELEKVAMEDYKDNPAFTFLHDKNSREFLY). Ser253 is subject to Phosphoserine. The stretch at 263–306 (LAEKLARFIADGGPEVETIALQNNRENQAFSFLYDPNSQGYRYY) is one SURP motif 2 repeat. 2 disordered regions span residues 316–342 (AKAG…PEAL) and 360–412 (PAVN…PSPL). A Phosphoserine modification is found at Ser323. Residues 360 to 369 (PAVNPTPSIP) show a composition bias toward pro residues. A Nuclear localization signal motif is present at residues 379-385 (KRKRKSR). Phosphoserine occurs at positions 408, 410, 413, and 484. One can recognise a G-patch domain in the interval 561-608 (VENIGYQMLMKMGWKEGEGLGTEGQGIKNPVNKGATTIDGAGFGIDRP).

Component of the spliceosome.

Its subcellular location is the nucleus. Functionally, plays a role in pre-mRNA splicing. This chain is SURP and G-patch domain-containing protein 1 (Sugp1), found in Rattus norvegicus (Rat).